A 490-amino-acid polypeptide reads, in one-letter code: Ketol-acid reductoisomerase (NADP(+)) (490 aa).

A KARI N-terminal Rossmann domain is found at alanine 18–serine 208. NADP(+) is bound by residues cysteine 45–glutamine 48, arginine 68, arginine 76, serine 78, and aspartate 108–glutamine 110. The active site involves histidine 132. Glycine 158 provides a ligand contact to NADP(+). 2 consecutive KARI C-terminal knotted domains span residues serine 209–alanine 344 and glycine 345–methionine 486. Residues aspartate 217, glutamate 221, glutamate 389, and glutamate 393 each coordinate Mg(2+). Serine 414 is a binding site for substrate.

Belongs to the ketol-acid reductoisomerase family. It depends on Mg(2+) as a cofactor.

The catalysed reaction is (2R)-2,3-dihydroxy-3-methylbutanoate + NADP(+) = (2S)-2-acetolactate + NADPH + H(+). The enzyme catalyses (2R,3R)-2,3-dihydroxy-3-methylpentanoate + NADP(+) = (S)-2-ethyl-2-hydroxy-3-oxobutanoate + NADPH + H(+). It participates in amino-acid biosynthesis; L-isoleucine biosynthesis; L-isoleucine from 2-oxobutanoate: step 2/4. It functions in the pathway amino-acid biosynthesis; L-valine biosynthesis; L-valine from pyruvate: step 2/4. Involved in the biosynthesis of branched-chain amino acids (BCAA). Catalyzes an alkyl-migration followed by a ketol-acid reduction of (S)-2-acetolactate (S2AL) to yield (R)-2,3-dihydroxy-isovalerate. In the isomerase reaction, S2AL is rearranged via a Mg-dependent methyl migration to produce 3-hydroxy-3-methyl-2-ketobutyrate (HMKB). In the reductase reaction, this 2-ketoacid undergoes a metal-dependent reduction by NADPH to yield (R)-2,3-dihydroxy-isovalerate. The sequence is that of Ketol-acid reductoisomerase (NADP(+)) from Marinomonas sp. (strain MWYL1).